A 249-amino-acid chain; its full sequence is Thrombin-like enzyme barnettobin (249 aa).

An N-terminal signal peptide occupies residues 1-10 (APKELQVSYA). Positions 11 to 16 (HKSSEL) are excised as a propeptide. In terms of domain architecture, Peptidase S1 spans 17 to 240 (VIGGDECDIN…YPPWIQSIIA (224 aa)). 6 disulfide bridges follow: Cys-23/Cys-154, Cys-41/Cys-57, Cys-89/Cys-247, Cys-133/Cys-201, Cys-165/Cys-180, and Cys-191/Cys-216. Residues His-56 and Asp-101 each act as charge relay system in the active site. 2 N-linked (GlcNAc...) asparagine glycosylation sites follow: Asn-145 and Asn-161. Ser-195 (charge relay system) is an active-site residue. N-linked (GlcNAc...) asparagine glycosylation occurs at Asn-242.

The protein belongs to the peptidase S1 family. Snake venom subfamily. In terms of assembly, monomer. In terms of processing, glycoprotein, contains approx. 52% carbohydrate which could be removed by N-glycosidase. Glycosylation is important, since deglycosylated barnettobin loses its clotting and defibrinogenating effects. As to expression, expressed by the venom gland.

The protein localises to the secreted. Its activity is regulated as follows. Both coagulant and amidolytic activities are inhibited by PMSF. Amidolytic activity is partially inhibited by DTT, chymostatin, SBTI and TLCK, but not by heparin and EDTA. In terms of biological role, thrombin-like snake venom serine protease that releases only fibrinopeptide A from human Aalpha chain of fibrinogen (specific coagulant activity was 251.7 NIH thrombin units/mg). Also shows fibrino(geno)lytic activities in vitro and defibrinogenating effects in vivo. In Bothrops barnetti (Barnett's lancehead), this protein is Thrombin-like enzyme barnettobin.